We begin with the raw amino-acid sequence, 215 residues long: Large ribosomal subunit protein uL4 (215 aa).

The segment at 43–100 (AAKRQGTHSTKTRGEVSGGGKKPYRQKGSGRARQGSTRAPQFTGGGTVHGPKPRDYSQ) is disordered.

Belongs to the universal ribosomal protein uL4 family. Part of the 50S ribosomal subunit.

In terms of biological role, one of the primary rRNA binding proteins, this protein initially binds near the 5'-end of the 23S rRNA. It is important during the early stages of 50S assembly. It makes multiple contacts with different domains of the 23S rRNA in the assembled 50S subunit and ribosome. Functionally, forms part of the polypeptide exit tunnel. The polypeptide is Large ribosomal subunit protein uL4 (Mycolicibacterium smegmatis (Mycobacterium smegmatis)).